The following is a 162-amino-acid chain: ATP-dependent Clp protease adapter protein CLPS1, chloroplastic (162 aa).

Residues 1–58 (MAASCLRPAPTASAQMMTRSPVAGLPRPCSALQRSGCTLQGAFGTFAPQTTRTFVVTW) constitute a chloroplast transit peptide.

The protein belongs to the ClpS family.

It localises to the plastid. The protein resides in the chloroplast stroma. In terms of biological role, small adapter protein that modulate the activity of plastid Clp protease system (CLPC). Probably involved in substrate selection for plastid CLPC. The sequence is that of ATP-dependent Clp protease adapter protein CLPS1, chloroplastic from Chlamydomonas reinhardtii (Chlamydomonas smithii).